Reading from the N-terminus, the 126-residue chain is Aspartate 1-decarboxylase (126 aa).

The active-site Schiff-base intermediate with substrate; via pyruvic acid is the serine 25. Pyruvic acid (Ser) is present on serine 25. Threonine 57 contributes to the substrate binding site. Tyrosine 58 serves as the catalytic Proton donor. 73 to 75 (GGA) provides a ligand contact to substrate.

Belongs to the PanD family. In terms of assembly, heterooctamer of four alpha and four beta subunits. Pyruvate serves as cofactor. In terms of processing, is synthesized initially as an inactive proenzyme, which is activated by self-cleavage at a specific serine bond to produce a beta-subunit with a hydroxyl group at its C-terminus and an alpha-subunit with a pyruvoyl group at its N-terminus.

It localises to the cytoplasm. The enzyme catalyses L-aspartate + H(+) = beta-alanine + CO2. Its pathway is cofactor biosynthesis; (R)-pantothenate biosynthesis; beta-alanine from L-aspartate: step 1/1. In terms of biological role, catalyzes the pyruvoyl-dependent decarboxylation of aspartate to produce beta-alanine. The chain is Aspartate 1-decarboxylase from Acinetobacter baylyi (strain ATCC 33305 / BD413 / ADP1).